A 335-amino-acid chain; its full sequence is Glyceraldehyde-3-phosphate dehydrogenase (335 aa).

Residues 13 to 14 (TI) and G111 contribute to the NAD(+) site. 140-142 (SCN) lines the D-glyceraldehyde 3-phosphate pocket. C141 serves as the catalytic Nucleophile. R169 is a binding site for NAD(+). Residues T171 and 195-196 (HG) contribute to the D-glyceraldehyde 3-phosphate site. Q300 is an NAD(+) binding site.

This sequence belongs to the glyceraldehyde-3-phosphate dehydrogenase family. As to quaternary structure, homotetramer.

Its subcellular location is the cytoplasm. It catalyses the reaction D-glyceraldehyde 3-phosphate + phosphate + NADP(+) = (2R)-3-phospho-glyceroyl phosphate + NADPH + H(+). It carries out the reaction D-glyceraldehyde 3-phosphate + phosphate + NAD(+) = (2R)-3-phospho-glyceroyl phosphate + NADH + H(+). The protein operates within carbohydrate degradation; glycolysis; pyruvate from D-glyceraldehyde 3-phosphate: step 1/5. This chain is Glyceraldehyde-3-phosphate dehydrogenase, found in Methanosarcina mazei (strain ATCC BAA-159 / DSM 3647 / Goe1 / Go1 / JCM 11833 / OCM 88) (Methanosarcina frisia).